Here is a 94-residue protein sequence, read N- to C-terminus: Co-chaperonin GroES (94 aa).

The protein belongs to the GroES chaperonin family. As to quaternary structure, heptamer of 7 subunits arranged in a ring. Interacts with the chaperonin GroEL.

It is found in the cytoplasm. Together with the chaperonin GroEL, plays an essential role in assisting protein folding. The GroEL-GroES system forms a nano-cage that allows encapsulation of the non-native substrate proteins and provides a physical environment optimized to promote and accelerate protein folding. GroES binds to the apical surface of the GroEL ring, thereby capping the opening of the GroEL channel. The sequence is that of Co-chaperonin GroES from Brevibacillus brevis (strain 47 / JCM 6285 / NBRC 100599).